Here is a 122-residue protein sequence, read N- to C-terminus: Large ribosomal subunit protein uL14 (122 aa).

The protein belongs to the universal ribosomal protein uL14 family. In terms of assembly, part of the 50S ribosomal subunit. Forms a cluster with proteins L3 and L19. In the 70S ribosome, L14 and L19 interact and together make contacts with the 16S rRNA in bridges B5 and B8.

Binds to 23S rRNA. Forms part of two intersubunit bridges in the 70S ribosome. This is Large ribosomal subunit protein uL14 from Novosphingobium aromaticivorans (strain ATCC 700278 / DSM 12444 / CCUG 56034 / CIP 105152 / NBRC 16084 / F199).